Here is a 178-residue protein sequence, read N- to C-terminus: Actin-related protein 2/3 complex subunit 3-B (178 aa).

It belongs to the ARPC3 family. Component of the Arp2/3 complex composed of actr2/arp2, actr3/arp3, arpc1 (arpc1a or arpc1b), arpc2, arpc3, arpc4 and arpc5.

The protein localises to the cytoplasm. It localises to the cytoskeleton. It is found in the cell projection. The protein resides in the nucleus. Its function is as follows. Component of the Arp2/3 complex, a multiprotein complex that mediates actin polymerization upon stimulation by nucleation-promoting factor (NPF). The Arp2/3 complex mediates the formation of branched actin networks in the cytoplasm, providing the force for cell motility. In addition to its role in the cytoplasmic cytoskeleton, the Arp2/3 complex also promotes actin polymerization in the nucleus, thereby regulating gene transcription and repair of damaged DNA. The Arp2/3 complex promotes homologous recombination (HR) repair in response to DNA damage by promoting nuclear actin polymerization, leading to drive motility of double-strand breaks (DSBs). This is Actin-related protein 2/3 complex subunit 3-B (arpc3-b) from Xenopus laevis (African clawed frog).